Here is a 197-residue protein sequence, read N- to C-terminus: GTP cyclohydrolase-2 (197 aa).

49–53 provides a ligand contact to GTP; sequence RVHSE. Positions 54, 65, and 67 each coordinate Zn(2+). Residues Q70, 92 to 94, and T114 each bind GTP; that span reads EGR. The active-site Proton acceptor is D126. The active-site Nucleophile is R128. 2 residues coordinate GTP: T149 and K154.

The protein belongs to the GTP cyclohydrolase II family. In terms of assembly, homodimer. The cofactor is Zn(2+).

It carries out the reaction GTP + 4 H2O = 2,5-diamino-6-hydroxy-4-(5-phosphoribosylamino)-pyrimidine + formate + 2 phosphate + 3 H(+). The protein operates within cofactor biosynthesis; riboflavin biosynthesis; 5-amino-6-(D-ribitylamino)uracil from GTP: step 1/4. Its function is as follows. Catalyzes the conversion of GTP to 2,5-diamino-6-ribosylamino-4(3H)-pyrimidinone 5'-phosphate (DARP), formate and pyrophosphate. In Pectobacterium atrosepticum (strain SCRI 1043 / ATCC BAA-672) (Erwinia carotovora subsp. atroseptica), this protein is GTP cyclohydrolase-2.